The chain runs to 258 residues: Trypsin (258 aa).

The N-terminal stretch at 1-16 (MIRFTLALAVIGVTFA) is a signal peptide. A propeptide spans 17-29 (ASTPQIETNPNLE) (activation peptide). The region spanning 30–257 (IIGGHDANII…FRDWINEETE (228 aa)) is the Peptidase S1 domain. The cysteines at positions 55 and 71 are disulfide-linked. His-70 acts as the Charge relay system in catalysis. Asn-110 is a glycosylation site (N-linked (GlcNAc...) asparagine). Asp-117 (charge relay system) is an active-site residue. N-linked (GlcNAc...) asparagine glycans are attached at residues Asn-130 and Asn-188. 2 disulfide bridges follow: Cys-182/Cys-197 and Cys-209/Cys-233. Ser-213 serves as the catalytic Charge relay system.

It belongs to the peptidase S1 family. Expressed in larval carcasses and gut, and adult gut.

It is found in the secreted. It catalyses the reaction Preferential cleavage: Arg-|-Xaa, Lys-|-Xaa.. The polypeptide is Trypsin (Phaedon cochleariae (Mustard beetle)).